The chain runs to 335 residues: Probable nicotianamine synthase 2 (335 aa).

This sequence belongs to the nicotianamine synthase (NAS)-like family.

It carries out the reaction 3 S-adenosyl-L-methionine = nicotianamine + 3 S-methyl-5'-thioadenosine + 3 H(+). In terms of biological role, synthesizes nicotianamine, a polyamine that is the first intermediate in the synthesis of the phytosiderophores of the mugineic acid type found in gramineae which serves as a sensor for the physiological iron status within the plant, and/or might be involved in the transport of iron. This Hordeum vulgare (Barley) protein is Probable nicotianamine synthase 2 (NAS2).